The chain runs to 539 residues: Putative cysteine ligase BshC (539 aa).

Residues Ser146 and 384 to 386 (ERH) contribute to the ADP site. The stretch at 455–475 (LLKNAAFIQDQLQFLERTVMK) forms a coiled coil. ADP-binding positions include 490 to 493 (RIQN), Trp506, and Tyr510.

It belongs to the BshC family. In terms of assembly, homodimer in solution.

Its function is as follows. Involved in bacillithiol (BSH) biosynthesis. May catalyze the last step of the pathway, the addition of cysteine to glucosamine malate (GlcN-Mal) to generate BSH. The chain is Putative cysteine ligase BshC from Bacillus subtilis (strain 168).